The sequence spans 226 residues: Enolase-phosphatase E1 (226 aa).

This sequence belongs to the HAD-like hydrolase superfamily. MasA/MtnC family. As to quaternary structure, monomer. Mg(2+) is required as a cofactor.

The catalysed reaction is 5-methylsulfanyl-2,3-dioxopentyl phosphate + H2O = 1,2-dihydroxy-5-(methylsulfanyl)pent-1-en-3-one + phosphate. The protein operates within amino-acid biosynthesis; L-methionine biosynthesis via salvage pathway; L-methionine from S-methyl-5-thio-alpha-D-ribose 1-phosphate: step 3/6. Its pathway is amino-acid biosynthesis; L-methionine biosynthesis via salvage pathway; L-methionine from S-methyl-5-thio-alpha-D-ribose 1-phosphate: step 4/6. In terms of biological role, bifunctional enzyme that catalyzes the enolization of 2,3-diketo-5-methylthiopentyl-1-phosphate (DK-MTP-1-P) into the intermediate 2-hydroxy-3-keto-5-methylthiopentenyl-1-phosphate (HK-MTPenyl-1-P), which is then dephosphorylated to form the acireductone 1,2-dihydroxy-3-keto-5-methylthiopentene (DHK-MTPene). This is Enolase-phosphatase E1 from Shewanella amazonensis (strain ATCC BAA-1098 / SB2B).